We begin with the raw amino-acid sequence, 337 residues long: Putative [LysW]-lysine/[LysW]-ornithine hydrolase (337 aa).

H67 contributes to the Zn(2+) binding site. D69 is a catalytic residue. D91 provides a ligand contact to Zn(2+). Catalysis depends on E118, which acts as the Proton acceptor. Residues E119, E140, and H298 each coordinate Zn(2+).

It belongs to the peptidase M20A family. LysK subfamily. It depends on Zn(2+) as a cofactor. Co(2+) is required as a cofactor.

The protein localises to the cytoplasm. It carries out the reaction [amino-group carrier protein]-C-terminal-gamma-(L-lysyl)-L-glutamate + H2O = [amino-group carrier protein]-C-terminal-L-glutamate + L-lysine. The catalysed reaction is [amino-group carrier protein]-C-terminal-gamma-(L-ornithyl)-L-glutamate + H2O = [amino-group carrier protein]-C-terminal-L-glutamate + L-ornithine. Its pathway is amino-acid biosynthesis; L-lysine biosynthesis via AAA pathway; L-lysine from L-alpha-aminoadipate (Thermus route): step 5/5. The protein operates within amino-acid biosynthesis; L-arginine biosynthesis. Functionally, catalyzes the release of L-lysine from [LysW]-gamma-L-lysine and the release of L-ornithine from [LysW]-L-ornithine. The sequence is that of Putative [LysW]-lysine/[LysW]-ornithine hydrolase from Pyrococcus abyssi (strain GE5 / Orsay).